Reading from the N-terminus, the 182-residue chain is Small ribosomal subunit protein uS9 (182 aa).

This sequence belongs to the universal ribosomal protein uS9 family.

This is Small ribosomal subunit protein uS9 from Corynebacterium glutamicum (strain R).